Here is a 297-residue protein sequence, read N- to C-terminus: tRNA dimethylallyltransferase (297 aa).

An ATP-binding site is contributed by 15–22 (GPTASGKS). 17–22 (TASGKS) serves as a coordination point for substrate. 2 interaction with substrate tRNA regions span residues 40–43 (DSMQ) and 164–168 (QRIVR).

The protein belongs to the IPP transferase family. Monomer. The cofactor is Mg(2+).

It carries out the reaction adenosine(37) in tRNA + dimethylallyl diphosphate = N(6)-dimethylallyladenosine(37) in tRNA + diphosphate. Functionally, catalyzes the transfer of a dimethylallyl group onto the adenine at position 37 in tRNAs that read codons beginning with uridine, leading to the formation of N6-(dimethylallyl)adenosine (i(6)A). In Rhizobium johnstonii (strain DSM 114642 / LMG 32736 / 3841) (Rhizobium leguminosarum bv. viciae), this protein is tRNA dimethylallyltransferase.